We begin with the raw amino-acid sequence, 262 residues long: Nurim (262 aa).

Over 1–4 (MAPA) the chain is Nuclear. Residues 5–28 (LLLIPAALASFILAFGTGVEFVRF) form a helical membrane-spanning segment. Over 29–58 (TSLRPLLGGIPESGGPDARQGWLAALQDRS) the chain is Perinuclear space. Residues 59-80 (ILAPLAWDLGLLLLFVGQHSLM) traverse the membrane as a helical segment. Residues 81–97 (AAERVKAWTSRYFGVLQ) lie on the Nuclear side of the membrane. The helical transmembrane segment at 98–114 (RSLYVACTALALQLVMR) threads the bilayer. At 115 to 133 (YWEPIPKGPVLWEARAEPW) the chain is on the perinuclear space side. Residues 134–164 (ATWVPLLCFVLHVISWLLIFSILLVFDYAEL) traverse the membrane as a helical segment. Residues 165-191 (MGLKQVYYHVLGLGEPLALKSPRALRL) are Nuclear-facing. The chain crosses the membrane as a helical span at residues 192-210 (FSHLRHPVCVELLTVLWVV). Topologically, residues 211-216 (PTLGTD) are perinuclear space. Residues 217–234 (RLLLAFLLTLYLGLAHGL) traverse the membrane as a helical segment. The Nuclear segment spans residues 235-262 (DQQDLRYLRAQLQRKLHLLSRPQDGEAE).

The protein belongs to the nurim family.

Its subcellular location is the nucleus inner membrane. The polypeptide is Nurim (NRM) (Homo sapiens (Human)).